A 122-amino-acid polypeptide reads, in one-letter code: Large ribosomal subunit protein uL14 (122 aa).

This sequence belongs to the universal ribosomal protein uL14 family. As to quaternary structure, part of the 50S ribosomal subunit. Forms a cluster with proteins L3 and L19. In the 70S ribosome, L14 and L19 interact and together make contacts with the 16S rRNA in bridges B5 and B8.

Its function is as follows. Binds to 23S rRNA. Forms part of two intersubunit bridges in the 70S ribosome. The chain is Large ribosomal subunit protein uL14 from Corynebacterium aurimucosum (strain ATCC 700975 / DSM 44827 / CIP 107346 / CN-1) (Corynebacterium nigricans).